The primary structure comprises 360 residues: Phospho-N-acetylmuramoyl-pentapeptide-transferase (360 aa).

Transmembrane regions (helical) follow at residues 25-45 (RAILSVLTALVLSLWLGPTLI), 73-93 (TMGGVLILAAVLGSSLLWADL), 97-117 (YVWVVLLVTTGFGIVGFVDDY), 128-148 (LIAKWKYFWQSVIASVAAVYL), 168-188 (VMPQLGMLYMLMAYFVIVGTS), 199-219 (GLAIMPTIMVAAALGIFAYVS), 236-256 (TAELLVVCTAIVGAGLGFLWF), 262-282 (LVFMGDVGSLALGAALGIIAI), 288-308 (LVLFIMGGVFVMETLSVMLQV), and 338-358 (VIVRFWILSLIFVLIGLATLK).

It belongs to the glycosyltransferase 4 family. MraY subfamily. It depends on Mg(2+) as a cofactor.

It is found in the cell inner membrane. The enzyme catalyses UDP-N-acetyl-alpha-D-muramoyl-L-alanyl-gamma-D-glutamyl-meso-2,6-diaminopimeloyl-D-alanyl-D-alanine + di-trans,octa-cis-undecaprenyl phosphate = di-trans,octa-cis-undecaprenyl diphospho-N-acetyl-alpha-D-muramoyl-L-alanyl-D-glutamyl-meso-2,6-diaminopimeloyl-D-alanyl-D-alanine + UMP. It functions in the pathway cell wall biogenesis; peptidoglycan biosynthesis. Its function is as follows. Catalyzes the initial step of the lipid cycle reactions in the biosynthesis of the cell wall peptidoglycan: transfers peptidoglycan precursor phospho-MurNAc-pentapeptide from UDP-MurNAc-pentapeptide onto the lipid carrier undecaprenyl phosphate, yielding undecaprenyl-pyrophosphoryl-MurNAc-pentapeptide, known as lipid I. The protein is Phospho-N-acetylmuramoyl-pentapeptide-transferase of Idiomarina loihiensis (strain ATCC BAA-735 / DSM 15497 / L2-TR).